Consider the following 156-residue polypeptide: 6,7-dimethyl-8-ribityllumazine synthase (156 aa).

5-amino-6-(D-ribitylamino)uracil-binding positions include Phe23, 57-59 (AYE), and 81-83 (AII). (2S)-2-hydroxy-3-oxobutyl phosphate is bound at residue 86–87 (GT). Catalysis depends on His89, which acts as the Proton donor. Phe114 serves as a coordination point for 5-amino-6-(D-ribitylamino)uracil. Arg128 contacts (2S)-2-hydroxy-3-oxobutyl phosphate.

It belongs to the DMRL synthase family.

It catalyses the reaction (2S)-2-hydroxy-3-oxobutyl phosphate + 5-amino-6-(D-ribitylamino)uracil = 6,7-dimethyl-8-(1-D-ribityl)lumazine + phosphate + 2 H2O + H(+). Its pathway is cofactor biosynthesis; riboflavin biosynthesis; riboflavin from 2-hydroxy-3-oxobutyl phosphate and 5-amino-6-(D-ribitylamino)uracil: step 1/2. Catalyzes the formation of 6,7-dimethyl-8-ribityllumazine by condensation of 5-amino-6-(D-ribitylamino)uracil with 3,4-dihydroxy-2-butanone 4-phosphate. This is the penultimate step in the biosynthesis of riboflavin. The sequence is that of 6,7-dimethyl-8-ribityllumazine synthase from Helicobacter pylori (strain P12).